The primary structure comprises 1305 residues: Cyclin-G-associated kinase (1305 aa).

At S2 the chain carries N-acetylserine. Residues S2 and S16 each carry the phosphoserine modification. The 276-residue stretch at 40 to 315 (LRVRRVLAEG…IAEVVRQLQE (276 aa)) folds into the Protein kinase domain. D173 serves as the catalytic Proton acceptor. The tract at residues 332–354 (LEQNGGYGNSGPSRAQPPSGGPV) is disordered. The Phosphatase tensin-type domain maps to 397 to 564 (SVANYAKGDL…EYVCDMVAEE (168 aa)). The residue at position 454 (S454) is a Phosphoserine. A C2 tensin-type domain is found at 570–708 (SKPMLVKSVV…FQVNLEVEVE (139 aa)). The segment at 747–856 (FGKPELPRQP…TPRLAAGTRQ (110 aa)) is disordered. Residue S768 is modified to Phosphoserine. The residue at position 774 (T774) is a Phosphothreonine. A compositionally biased stretch (polar residues) spans 776–789 (SDSPQSSSTDTNHF). S781 is modified (phosphoserine). Position 792 is a phosphothreonine (T792). Polar residues predominate over residues 805 to 817 (VDNTSPKESQSNL). A phosphoserine mark is found at S809, S824, and S827. Residues 822-832 (DGSEVSDEEEA) show a composition bias toward acidic residues. The span at 836–848 (SEERKPGAGEDTP) shows a compositional bias: basic and acidic residues. S938 carries the post-translational modification Phosphoserine. The interval 1044 to 1141 (LPGPASMPVP…PQAKPAPRAS (98 aa)) is disordered. The span at 1105-1131 (VGTSATTHKSNSSWQTTRPTAPGTSWP) shows a compositional bias: polar residues. The residue at position 1122 (R1122) is an Omega-N-methylarginine. S1171 is modified (phosphoserine). A J domain is found at 1241–1305 (SRWTPVSMAD…FENQGSRPLF (65 aa)).

It belongs to the protein kinase superfamily. Ser/Thr protein kinase family.

The protein resides in the cytoplasm. The protein localises to the perinuclear region. It localises to the golgi apparatus. Its subcellular location is the trans-Golgi network. It is found in the cell junction. The protein resides in the focal adhesion. The protein localises to the cytoplasmic vesicle. It localises to the clathrin-coated vesicle. The catalysed reaction is L-seryl-[protein] + ATP = O-phospho-L-seryl-[protein] + ADP + H(+). The enzyme catalyses L-threonyl-[protein] + ATP = O-phospho-L-threonyl-[protein] + ADP + H(+). Its function is as follows. Associates with cyclin G and CDK5. Seems to act as an auxilin homolog that is involved in the uncoating of clathrin-coated vesicles by Hsc70 in non-neuronal cells. Expression oscillates slightly during the cell cycle, peaking at G1. May play a role in clathrin-mediated endocytosis and intracellular trafficking, and in the dynamics of clathrin assembly/disassembly. The polypeptide is Cyclin-G-associated kinase (Rattus norvegicus (Rat)).